The following is a 605-amino-acid chain: Glutamine--fructose-6-phosphate aminotransferase [isomerizing] (605 aa).

The active-site Nucleophile; for GATase activity is C2. The Glutamine amidotransferase type-2 domain occupies 2 to 220; that stretch reads CGIVGVTGKD…DGEIVVVKPD (219 aa). 2 SIS domains span residues 286–426 and 458–595; these read LLTA…VDQP and AKSA…VDKP. The active-site For Fru-6P isomerization activity is K600.

As to quaternary structure, homodimer.

It localises to the cytoplasm. It carries out the reaction D-fructose 6-phosphate + L-glutamine = D-glucosamine 6-phosphate + L-glutamate. Catalyzes the first step in hexosamine metabolism, converting fructose-6P into glucosamine-6P using glutamine as a nitrogen source. The sequence is that of Glutamine--fructose-6-phosphate aminotransferase [isomerizing] from Lactiplantibacillus plantarum (strain ATCC BAA-793 / NCIMB 8826 / WCFS1) (Lactobacillus plantarum).